A 377-amino-acid polypeptide reads, in one-letter code: MSRLQFQLQATDGAARRGQLSFPCGTVQTPTFMPVGTYGAVKGVLPGQLCDLGAEIILGNTFHLFLRPGLEVIADHGGLHGFMRWNGPILTDSGGFQVFSLAHRRKISEQGVTFAAPTDGAQVFLGPEESMKIQKVLNSDVVMIFDECTPYPATEDVARDSMELSLRWAQRSRDAHDALDNDAALFGIIQGGVHPDLRGRSLDGLQAIGFDGYGIGGLAVGESESERNVILEYLHPRLPTDRPRYLMGVGRPEDLVESVARGVDMFDCVMPTRHARNGQYFTGFGTVKIRNACYARDVDPIEQGCGCPACVGGYTRAYLRHLDRCNEMLASMLGSLHNLWYYETLMANMRAAITAGTFFAFRRSFYLARGLDPPPLP.

The active-site Proton acceptor is Asp92. Residues 92–96 (DSGGF), Asp146, Gln190, and Gly217 each bind substrate. Residues 248 to 254 (GVGRPED) form an RNA binding region. Residue Asp267 is the Nucleophile of the active site. The tract at residues 272-276 (TRHAR) is RNA binding; important for wobble base 34 recognition. Positions 305, 307, 310, and 337 each coordinate Zn(2+).

It belongs to the queuine tRNA-ribosyltransferase family. Homodimer. Within each dimer, one monomer is responsible for RNA recognition and catalysis, while the other monomer binds to the replacement base PreQ1. Zn(2+) is required as a cofactor.

The enzyme catalyses 7-aminomethyl-7-carbaguanine + guanosine(34) in tRNA = 7-aminomethyl-7-carbaguanosine(34) in tRNA + guanine. Its pathway is tRNA modification; tRNA-queuosine biosynthesis. In terms of biological role, catalyzes the base-exchange of a guanine (G) residue with the queuine precursor 7-aminomethyl-7-deazaguanine (PreQ1) at position 34 (anticodon wobble position) in tRNAs with GU(N) anticodons (tRNA-Asp, -Asn, -His and -Tyr). Catalysis occurs through a double-displacement mechanism. The nucleophile active site attacks the C1' of nucleotide 34 to detach the guanine base from the RNA, forming a covalent enzyme-RNA intermediate. The proton acceptor active site deprotonates the incoming PreQ1, allowing a nucleophilic attack on the C1' of the ribose to form the product. After dissociation, two additional enzymatic reactions on the tRNA convert PreQ1 to queuine (Q), resulting in the hypermodified nucleoside queuosine (7-(((4,5-cis-dihydroxy-2-cyclopenten-1-yl)amino)methyl)-7-deazaguanosine). This chain is Queuine tRNA-ribosyltransferase, found in Xylella fastidiosa (strain Temecula1 / ATCC 700964).